The following is a 516-amino-acid chain: Probable inorganic phosphate transporter 1-6 (516 aa).

The residue at position 2 (Ala-2) is an N-acetylalanine. Topologically, residues 2-25 (ANEEQGSILKALDVAKTQWYHVTA) are cytoplasmic. The helical transmembrane segment at 26–46 (VVVSGMGFFTDSYDLFVISLI) threads the bilayer. The Extracellular segment spans residues 47–71 (TKLLGRIYYQVPGSSSPGSLPDGIS). Residues 72 to 92 (AAVSGVAFAGTFIGQIFFGCL) form a helical membrane-spanning segment. Topologically, residues 93 to 100 (GDKLGRKR) are cytoplasmic. A helical transmembrane segment spans residues 101–121 (VYGLTLLIMTICSICSGLSLG). The Extracellular segment spans residues 122–132 (RDPKTVMVTLC). A helical transmembrane segment spans residues 133-153 (FFRFWLGFGIGGDYPLSATIM). Topologically, residues 154–162 (SEYSNKRTR) are cytoplasmic. A helical transmembrane segment spans residues 163-183 (GAFIAAVFGMQGIGILAAGAV). Over 184-212 (SLLVSAVFESKFPSRAYILDGAASTVPQA) the chain is Extracellular. Residues 213–233 (DYVWRIILMVGALPALLTYYW) traverse the membrane as a helical segment. Topologically, residues 234-293 (RMKMPETARYTALVSKNAEQAALDMTKVLNVDIEASAAKNDQARVSSDEFGLFSMKFLRR) are cytoplasmic. A helical membrane pass occupies residues 294 to 314 (HGLHLLGTASTWFLLDIAFYS). Residues 315-349 (QNLFQKDIFTTIGWLPSAKTMNAIQELYMIAKAQT) lie on the Extracellular side of the membrane. Residues 350–370 (IIACCSTVPGYFFTVGFIDYM) traverse the membrane as a helical segment. At 371-374 (GRKK) the chain is on the cytoplasmic side. A helical transmembrane segment spans residues 375–395 (IQIMGFAMMTIFMLSLAIPYH). Residues 396–403 (HWTLPANR) lie on the Extracellular side of the membrane. The helical transmembrane segment at 404-424 (IGFVVLYSFTFFFSNFGPNAT) threads the bilayer. Topologically, residues 425-442 (TFIVPAEIFPARIRSTCH) are cytoplasmic. The helical transmembrane segment at 443 to 463 (GISAASGKAGAMVGSFGFSAL) threads the bilayer. The Extracellular segment spans residues 464–471 (VKALGMSN). A helical membrane pass occupies residues 472–492 (TLYIMAGINLLGLLLTFTIPE). Residues 493–516 (TNGKSLEELSGETEPEKIKEKIVV) lie on the Cytoplasmic side of the membrane.

It belongs to the major facilitator superfamily. Phosphate:H(+) symporter (TC 2.A.1.9) family. In terms of tissue distribution, expressed in anthers, tapetumand mature pollen and, to a lower extent, in hydathodes and vascular tissues of cotyledons of flowering plants.

The protein localises to the membrane. In terms of biological role, high-affinity transporter for external inorganic phosphate. This Arabidopsis thaliana (Mouse-ear cress) protein is Probable inorganic phosphate transporter 1-6 (PHT1-6).